The following is a 302-amino-acid chain: Bifunctional ligase/repressor BirA (302 aa).

A DNA-binding region (H-T-H motif) is located at residues 14 to 33 (QPKVRSELEKFSKNLEEDIQ). In terms of domain architecture, BPL/LPL catalytic spans 62–236 (QISTALFPYS…HLYTRLNIFE (175 aa)). Residues 80-82 (STN), glutamine 103, 107-109 (RGR), and lysine 167 each bind biotin.

This sequence belongs to the biotin--protein ligase family.

It catalyses the reaction biotin + L-lysyl-[protein] + ATP = N(6)-biotinyl-L-lysyl-[protein] + AMP + diphosphate + H(+). In terms of biological role, acts both as a biotin--[acetyl-CoA-carboxylase] ligase and a biotin-operon repressor. In the presence of ATP, BirA activates biotin to form the BirA-biotinyl-5'-adenylate (BirA-bio-5'-AMP or holoBirA) complex. HoloBirA can either transfer the biotinyl moiety to the biotin carboxyl carrier protein (BCCP) subunit of acetyl-CoA carboxylase, or bind to the biotin operator site and inhibit transcription of the operon. The sequence is that of Bifunctional ligase/repressor BirA from Haemophilus influenzae (strain ATCC 51907 / DSM 11121 / KW20 / Rd).